A 252-amino-acid chain; its full sequence is Petrobactin import ATP-binding protein YclP (252 aa).

Residues 2 to 236 (VEVRNVSKQY…SVLEEIYDMT (235 aa)) form the ABC transporter domain. ATP is bound at residue 34–41 (GPNGAGKS).

It belongs to the ABC transporter superfamily. As to quaternary structure, the complex is composed of two ATP-binding proteins (YclP), two transmembrane proteins (YclN and YclO) and a solute-binding protein (YclQ).

Its subcellular location is the cell membrane. It carries out the reaction a Fe(III)-siderophore(out) + ATP + H2O = a Fe(III)-siderophore(in) + ADP + phosphate + H(+). In terms of biological role, part of the ABC transporter complex YclNOPQ involved in uptake of ferric-petrobactin. Petrobactin is a photoreactive 3,4-catecholate siderophore produced by many members of the B.cereus group, including B.anthracis. Probably responsible for energy coupling to the transport system. The protein is Petrobactin import ATP-binding protein YclP (yclP) of Bacillus subtilis (strain 168).